The sequence spans 264 residues: Thymidylate synthase (264 aa).

Residue Arg-21 coordinates dUMP. His-51 serves as a coordination point for (6R)-5,10-methylene-5,6,7,8-tetrahydrofolate. 126 to 127 is a binding site for dUMP; that stretch reads RR. Residue Cys-146 is the Nucleophile of the active site. DUMP is bound by residues 166–169, Asn-177, and 207–209; these read RSCD and HLY. Position 169 (Asp-169) interacts with (6R)-5,10-methylene-5,6,7,8-tetrahydrofolate. Ala-263 is a binding site for (6R)-5,10-methylene-5,6,7,8-tetrahydrofolate.

It belongs to the thymidylate synthase family. Bacterial-type ThyA subfamily. Homodimer.

It localises to the cytoplasm. The catalysed reaction is dUMP + (6R)-5,10-methylene-5,6,7,8-tetrahydrofolate = 7,8-dihydrofolate + dTMP. Its pathway is pyrimidine metabolism; dTTP biosynthesis. In terms of biological role, catalyzes the reductive methylation of 2'-deoxyuridine-5'-monophosphate (dUMP) to 2'-deoxythymidine-5'-monophosphate (dTMP) while utilizing 5,10-methylenetetrahydrofolate (mTHF) as the methyl donor and reductant in the reaction, yielding dihydrofolate (DHF) as a by-product. This enzymatic reaction provides an intracellular de novo source of dTMP, an essential precursor for DNA biosynthesis. The protein is Thymidylate synthase of Aeromonas salmonicida (strain A449).